The following is a 130-amino-acid chain: MSMQDPIADMLTRIRNGQAANKAAVTMPSSKLKVAIANVLKEEGFIEDFKVEGDTKPELELTLKYFQGKAVVESIQRVSRPGLRIYKGKDELPKVMAGLGIAVVSTSKGVMTDRAARQAGLGGEIICYVA.

It belongs to the universal ribosomal protein uS8 family. In terms of assembly, part of the 30S ribosomal subunit. Contacts proteins S5 and S12.

Functionally, one of the primary rRNA binding proteins, it binds directly to 16S rRNA central domain where it helps coordinate assembly of the platform of the 30S subunit. The polypeptide is Small ribosomal subunit protein uS8 (Salmonella arizonae (strain ATCC BAA-731 / CDC346-86 / RSK2980)).